The primary structure comprises 300 residues: Large ribosomal subunit protein uL18 (300 aa).

The segment covering 246 to 267 has biased composition (basic and acidic residues); sequence NIRSDPKRDRKPKKDVSKEPKR. Positions 246 to 276 are disordered; the sequence is NIRSDPKRDRKPKKDVSKEPKRWNAKKLTNA.

Belongs to the universal ribosomal protein uL18 family. As to quaternary structure, component of the large ribosomal subunit (LSU).

Its subcellular location is the cytoplasm. It localises to the nucleus. Its function is as follows. Component of the ribosome, a large ribonucleoprotein complex responsible for the synthesis of proteins in the cell. The small ribosomal subunit (SSU) binds messenger RNAs (mRNAs) and translates the encoded message by selecting cognate aminoacyl-transfer RNA (tRNA) molecules. The large subunit (LSU) contains the ribosomal catalytic site termed the peptidyl transferase center (PTC), which catalyzes the formation of peptide bonds, thereby polymerizing the amino acids delivered by tRNAs into a polypeptide chain. The nascent polypeptides leave the ribosome through a tunnel in the LSU and interact with protein factors that function in enzymatic processing, targeting, and the membrane insertion of nascent chains at the exit of the ribosomal tunnel. In Toxoptera citricida (Brown citrus aphid), this protein is Large ribosomal subunit protein uL18 (RpL5).